Here is a 339-residue protein sequence, read N- to C-terminus: Annexin A2 (339 aa).

S2 bears the N-acetylserine mark. Positions 2–24 (STVHEILCKLSLEGDHSTPPSAY) are S100A10-binding site. Y24 is modified (phosphotyrosine; by SRC). S26 carries the phosphoserine; by PKC modification. Annexin repeat units follow at residues 33 to 104 (FDAE…GLLK) and 105 to 176 (TPAQ…ALAK). K49 carries the N6-acetyllysine; alternate modification. Residue K49 forms a Glycyl lysine isopeptide (Lys-Gly) (interchain with G-Cter in SUMO1); alternate linkage. K49 participates in a covalent cross-link: Glycyl lysine isopeptide (Lys-Gly) (interchain with G-Cter in SUMO2); alternate. Position 152 is an N6-acetyllysine (K152). S184 carries the post-translational modification Phosphoserine. Annexin repeat units follow at residues 189-261 (ELID…NLVQ) and 265-336 (NKPL…YLCG). Y199 carries the phosphotyrosine modification. K227 carries the post-translational modification N6-acetyllysine.

This sequence belongs to the annexin family. Heterotetramer containing 2 light chains of S100A10/p11 and 2 heavy chains of ANXA2/p36. Interacts with ATP1B1. Interacts with DYSF. Interacts with COCH. Interacts (via repeat Annexin 1) with PCSK9 (via the C-terminal domain); the interaction inhibits the degradation of LDLR. Interacts with CEACAM1 (via the cytoplasmic domain); this interaction is regulated by phosphorylation of CEACAM1. Interacts with APPL2 and APPL1; targets APPL2 to endosomes and acting in parallel to RAB5A. Interacts with S100A4. May interact with UBAP2. Interacts with PLEKHG4B; this interaction is required for PLEKHG4B localization to cell-cell adhesions. Interacts with FAM13A. Interacts with salivary cystatin-L2 (via loop 2) from the tick Ixodes scapularis; the interaction results in reduced activation of mouse NLRC4 inflammasome formation upon Anaplasma phagocytophilum infection. In terms of processing, ISGylated.

Its subcellular location is the secreted. It is found in the extracellular space. The protein resides in the extracellular matrix. It localises to the basement membrane. The protein localises to the melanosome. Its subcellular location is the early endosome. Functionally, calcium-regulated membrane-binding protein whose affinity for calcium is greatly enhanced by anionic phospholipids. It binds two calcium ions with high affinity. May be involved in heat-stress response. Inhibits PCSK9-enhanced LDLR degradation, probably reduces PCSK9 protein levels via a translational mechanism but also competes with LDLR for binding with PCSK9. Binds to endosomes damaged by phagocytosis of particulate wear debris and participates in endosomal membrane stabilization, thereby limiting NLRP3 inflammasome activation. Required for endothelial cell surface plasmin generation and may support fibrinolytic surveillance and neoangiogenesis. Its function is as follows. (Microbial infection) Regulates the formation of the NLRC4 inflammasome triggered by Anaplasma phagocytophilum infection. In terms of biological role, (Microbial infection) Protects against Klebsiella pneumoniae infection. Attenuates bacteria-induced pulmonary inflammation and promotes intro-abdominal pathogen clearance. Promotes anti-inflammatory responses by facilitating TLR4 internalization and translocation into early endosomal membranes; this leads to activation of TRAM-dependent endosomal signaling and release of anti-inflammatory cytokines. (Microbial infection) Promotes macrophage phagocytic efficiency towards Cryptococcus neoformans and ability to control fungal infection inside the cells. Functionally, (Microbial infection) Contributes to protection against Pseudomonas aeruginosa infection by regulating autophagy via the AKT1-mTOR-ULK1/2 signaling pathway and activation of Rho GTPases via FAM13A-mediated mechanism. This Mus musculus (Mouse) protein is Annexin A2 (Anxa2).